A 234-amino-acid chain; its full sequence is 2-C-methyl-D-erythritol 4-phosphate cytidylyltransferase (234 aa).

This sequence belongs to the IspD/TarI cytidylyltransferase family. IspD subfamily.

The catalysed reaction is 2-C-methyl-D-erythritol 4-phosphate + CTP + H(+) = 4-CDP-2-C-methyl-D-erythritol + diphosphate. Its pathway is isoprenoid biosynthesis; isopentenyl diphosphate biosynthesis via DXP pathway; isopentenyl diphosphate from 1-deoxy-D-xylulose 5-phosphate: step 2/6. In terms of biological role, catalyzes the formation of 4-diphosphocytidyl-2-C-methyl-D-erythritol from CTP and 2-C-methyl-D-erythritol 4-phosphate (MEP). The protein is 2-C-methyl-D-erythritol 4-phosphate cytidylyltransferase of Pseudomonas aeruginosa (strain ATCC 15692 / DSM 22644 / CIP 104116 / JCM 14847 / LMG 12228 / 1C / PRS 101 / PAO1).